The following is a 209-amino-acid chain: Uracil phosphoribosyltransferase (209 aa).

Residues arginine 79, arginine 104, and 131–139 each bind 5-phospho-alpha-D-ribose 1-diphosphate; that span reads DPMLATGGS. Residues isoleucine 194 and 199–201 each bind uracil; that span reads GDA. Residue aspartate 200 participates in 5-phospho-alpha-D-ribose 1-diphosphate binding.

This sequence belongs to the UPRTase family. Mg(2+) is required as a cofactor.

The enzyme catalyses UMP + diphosphate = 5-phospho-alpha-D-ribose 1-diphosphate + uracil. The protein operates within pyrimidine metabolism; UMP biosynthesis via salvage pathway; UMP from uracil: step 1/1. With respect to regulation, allosterically activated by GTP. Catalyzes the conversion of uracil and 5-phospho-alpha-D-ribose 1-diphosphate (PRPP) to UMP and diphosphate. The protein is Uracil phosphoribosyltransferase of Bacillus pumilus (strain SAFR-032).